The sequence spans 267 residues: Undecaprenyl-diphosphatase (267 aa).

8 helical membrane passes run 1-21 (MSELQIVVLALIQGLTEFLPI), 39-59 (QGLAFDLILNIGTLSAVLIYF), 87-107 (WWILWSTIPAALIGFFGKSLV), 113-133 (SGYVIAVTTTVFGLLLWWADA), 144-164 (TGLKGALFIGFAQVLALIPGT), 189-209 (FLMSIPIIAMASGYDLLKFIL), 219-239 (LFLGAGISFVSAILCIHVFLI), and 244-264 (VGMMPFVIYRLLLGGFLFYIL).

It belongs to the UppP family.

Its subcellular location is the cell inner membrane. It carries out the reaction di-trans,octa-cis-undecaprenyl diphosphate + H2O = di-trans,octa-cis-undecaprenyl phosphate + phosphate + H(+). Catalyzes the dephosphorylation of undecaprenyl diphosphate (UPP). Confers resistance to bacitracin. In Psychromonas ingrahamii (strain DSM 17664 / CCUG 51855 / 37), this protein is Undecaprenyl-diphosphatase.